Consider the following 289-residue polypeptide: MKKELMLRCANNFVLQNSVCLLGFLRLVKSHLTGRVGIIKARSFKGKRTNCTSTCVHLNNMEVTYLSQSLAQTIDNELMSDDVGYTTEQLMELAGLSIAQIICREYSFDKFKKILIFCGPGNNGGDGLVAARHLKQFGYDITVAYPKENTKVLFQRLLNLLHHYHVPVVKSATGEDIKMYDLVVDALFGFSFRGEPRSPFDEIIHMINQSNKPVVSVDVPSGINIDGDTAGTALSVNSEMNISLMLPKEGVRHYRKKHYLGGRFIPNSIVEKYNLKIPQFTGDNSYVQL.

The 207-residue stretch at 71 to 277 folds into the YjeF N-terminal domain; it reads AQTIDNELMS…SIVEKYNLKI (207 aa). 122-126 is a binding site for (6S)-NADPHX; that stretch reads NNGGD. Positions 123 and 185 each coordinate K(+). (6S)-NADPHX contacts are provided by residues 189–195 and Asp218; that span reads GFSFRGE. Ser221 contacts K(+).

This sequence belongs to the NnrE/AIBP family. The cofactor is K(+).

It catalyses the reaction (6R)-NADHX = (6S)-NADHX. It carries out the reaction (6R)-NADPHX = (6S)-NADPHX. In terms of biological role, catalyzes the epimerization of the S- and R-forms of NAD(P)HX, a damaged form of NAD(P)H that is a result of enzymatic or heat-dependent hydration. This is a prerequisite for the S-specific NAD(P)H-hydrate dehydratase to allow the repair of both epimers of NAD(P)HX. The protein is NAD(P)H-hydrate epimerase of Plasmodium knowlesi (strain H).